The chain runs to 30 residues: Putative alpha-amylase inhibitor (30 aa).

It belongs to the leguminous lectin family.

Lectin and alpha-amylase inhibitor. Acts as a defensive protein against insects. The chain is Putative alpha-amylase inhibitor from Phaseolus vulgaris (Kidney bean).